The following is a 179-amino-acid chain: Phosphopantetheine adenylyltransferase (179 aa).

Ser23 serves as a coordination point for substrate. ATP is bound by residues 23–24 (SF) and His31. Substrate is bound by residues Lys55, Ala87, and Arg101. ATP contacts are provided by residues 102-104 (GIR), Glu112, and 137-143 (FAHVSSS).

It belongs to the bacterial CoaD family. Homohexamer. The cofactor is Mg(2+).

It localises to the cytoplasm. The enzyme catalyses (R)-4'-phosphopantetheine + ATP + H(+) = 3'-dephospho-CoA + diphosphate. Its pathway is cofactor biosynthesis; coenzyme A biosynthesis; CoA from (R)-pantothenate: step 4/5. Its function is as follows. Reversibly transfers an adenylyl group from ATP to 4'-phosphopantetheine, yielding dephospho-CoA (dPCoA) and pyrophosphate. This Rhodopirellula baltica (strain DSM 10527 / NCIMB 13988 / SH1) protein is Phosphopantetheine adenylyltransferase.